A 159-amino-acid chain; its full sequence is Large ribosomal subunit protein uL11 (159 aa).

It belongs to the universal ribosomal protein uL11 family. Part of the ribosomal stalk of the 50S ribosomal subunit. Interacts with L10 and the large rRNA to form the base of the stalk. L10 forms an elongated spine to which L12 dimers bind in a sequential fashion forming a multimeric L10(L12)X complex.

Its function is as follows. Forms part of the ribosomal stalk which helps the ribosome interact with GTP-bound translation factors. The chain is Large ribosomal subunit protein uL11 from Methanococcus maripaludis (strain DSM 14266 / JCM 13030 / NBRC 101832 / S2 / LL).